The primary structure comprises 578 residues: Zinc finger protein with KRAB and SCAN domains 8 (578 aa).

The tract at residues 1–20 (MAEESRKPSAPSPPDQTPEE) is disordered. Phosphoserine is present on Ser-12. Lys-26 participates in a covalent cross-link: Glycyl lysine isopeptide (Lys-Gly) (interchain with G-Cter in SUMO2). The 83-residue stretch at 51–133 (RLRFRQLRYQ…TLLEDLERQI (83 aa)) folds into the SCAN box domain. The tract at residues 158 to 205 (ASAPEPPNTQLQSEATQHKSPVPQESQERAMSTSQSPTRSQKGSSGDQ) is disordered. Residues 165–205 (NTQLQSEATQHKSPVPQESQERAMSTSQSPTRSQKGSSGDQ) show a composition bias toward polar residues. Glycyl lysine isopeptide (Lys-Gly) (interchain with G-Cter in SUMO2) cross-links involve residues Lys-176 and Lys-199. Residue Ser-201 is modified to Phosphoserine. One can recognise a KRAB domain in the interval 220–316 (EKIEDMAVSL…GRLERQRGNP (97 aa)). Residues Lys-221, Lys-272, and Lys-288 each participate in a glycyl lysine isopeptide (Lys-Gly) (interchain with G-Cter in SUMO2) cross-link. 2 C2H2-type zinc fingers span residues 322 to 344 (HKCDECGKSFAQSSGLVRHWRIH) and 350 to 372 (YQCNVCGKAFSYRSALLSHQDIH). Glycyl lysine isopeptide (Lys-Gly) (interchain with G-Cter in SUMO2) cross-links involve residues Lys-374 and Lys-376. 7 consecutive C2H2-type zinc fingers follow at residues 378–400 (YHCKECGKAFSQNTGLILHQRIH), 406–428 (YQCNQCGKAFSQSAGLILHQRIH), 434–456 (YECNECGKAFSHSSHLIGHQRIH), 462–484 (YECDECGKTFRRSSHLIGHQRSH), 490–512 (YKCNECGRAFSQKSGLIEHQRIH), 518–540 (YKCKECGKAFNGNTGLIQHLRIH), and 546–568 (YQCNECGKAFIQRSSLIRHQRIH). Glycyl lysine isopeptide (Lys-Gly) (interchain with G-Cter in SUMO2) cross-links involve residues Lys-413 and Lys-441. Lys-502 participates in a covalent cross-link: Glycyl lysine isopeptide (Lys-Gly) (interchain with G-Cter in SUMO2). Lys-572 participates in a covalent cross-link: Glycyl lysine isopeptide (Lys-Gly) (interchain with G-Cter in SUMO2).

The protein belongs to the krueppel C2H2-type zinc-finger protein family.

The protein localises to the nucleus. May be involved in transcriptional regulation. This is Zinc finger protein with KRAB and SCAN domains 8 (ZKSCAN8) from Homo sapiens (Human).